Consider the following 240-residue polypeptide: Ubiquinone biosynthesis O-methyltransferase (240 aa).

Residues R36, G60, D81, and L123 each contribute to the S-adenosyl-L-methionine site.

It belongs to the methyltransferase superfamily. UbiG/COQ3 family.

It catalyses the reaction a 3-demethylubiquinol + S-adenosyl-L-methionine = a ubiquinol + S-adenosyl-L-homocysteine + H(+). It carries out the reaction a 3-(all-trans-polyprenyl)benzene-1,2-diol + S-adenosyl-L-methionine = a 2-methoxy-6-(all-trans-polyprenyl)phenol + S-adenosyl-L-homocysteine + H(+). It participates in cofactor biosynthesis; ubiquinone biosynthesis. In terms of biological role, O-methyltransferase that catalyzes the 2 O-methylation steps in the ubiquinone biosynthetic pathway. The sequence is that of Ubiquinone biosynthesis O-methyltransferase from Rickettsia bellii (strain OSU 85-389).